Consider the following 308-residue polypeptide: Protein translocase subunit SecF (308 aa).

6 helical membrane-spanning segments follow: residues 28-48 (SIIL…NFGI), 140-160 (IEAG…YIWV), 164-184 (WYFG…ALGF), 194-214 (LSTI…SVVI), 246-266 (ILTV…GGEA), and 272-292 (ILVF…SAPI).

Belongs to the SecD/SecF family. SecF subfamily. In terms of assembly, forms a complex with SecD. Part of the essential Sec protein translocation apparatus which comprises SecA, SecYEG and auxiliary proteins SecDF-YajC and YidC.

It localises to the cell inner membrane. In terms of biological role, part of the Sec protein translocase complex. Interacts with the SecYEG preprotein conducting channel. SecDF uses the proton motive force (PMF) to complete protein translocation after the ATP-dependent function of SecA. The sequence is that of Protein translocase subunit SecF from Rickettsia rickettsii (strain Sheila Smith).